The chain runs to 390 residues: Copper-containing nitrite reductase (390 aa).

Residues 1–18 (MKRQALAAMIASLFALAA) form the signal peptide. A lipid anchor (N-palmitoyl cysteine) is attached at cysteine 19. Cysteine 19 is lipidated: S-diacylglycerol cysteine. Residues 30-51 (ETPAAAAEAASSAAQTAAETPS) form a disordered region. 2 Plastocyanin-like domains span residues 101–195 (WTFD…ILVE) and 245–346 (GHVG…LKVE). Residues histidine 134, histidine 139, histidine 174, cysteine 175, histidine 183, and methionine 188 each contribute to the Cu cation site. Histidine 139 provides a ligand contact to substrate. A substrate-binding site is contributed by histidine 280. Cu cation is bound at residue histidine 329. The interval 367–390 (GAAPAASAPAASAPAASASEKSVY) is disordered. The span at 368–390 (AAPAASAPAASAPAASASEKSVY) shows a compositional bias: low complexity. 3 tandem repeats follow at residues 371 to 375 (AASAP), 376 to 380 (AASAP), and 381 to 385 (AASAS). The tract at residues 371-385 (AASAPAASAPAASAS) is 3 X 5 AA tandem repeats of A-A-S-A-P.

Belongs to the multicopper oxidase family. As to quaternary structure, homotrimer. The cofactor is Cu(+). Cu(2+) serves as cofactor.

It localises to the cell outer membrane. It catalyses the reaction nitric oxide + Fe(III)-[cytochrome c] + H2O = Fe(II)-[cytochrome c] + nitrite + 2 H(+). Catalyzes the reduction of nitrite to nitric oxide (NO). It could be essential for growth and survival in oxygen-depleted environments. This Neisseria meningitidis serogroup B (strain ATCC BAA-335 / MC58) protein is Copper-containing nitrite reductase (aniA).